We begin with the raw amino-acid sequence, 684 residues long: Glycine--tRNA ligase beta subunit (684 aa).

It belongs to the class-II aminoacyl-tRNA synthetase family. In terms of assembly, tetramer of two alpha and two beta subunits.

It is found in the cytoplasm. The catalysed reaction is tRNA(Gly) + glycine + ATP = glycyl-tRNA(Gly) + AMP + diphosphate. This is Glycine--tRNA ligase beta subunit from Ectopseudomonas mendocina (strain ymp) (Pseudomonas mendocina).